The sequence spans 105 residues: U7-hexatoxin-Hi1a (105 aa).

The signal sequence occupies residues 1-23; that stretch reads MKTILLFLGVCAVGASMMTGGWT.

The protein belongs to the cystatin family. In terms of processing, contains 2 disulfide bonds. In terms of tissue distribution, expressed by the venom gland.

The protein resides in the secreted. In terms of biological role, inhibits various C1 cysteine proteases. This protein has no toxic activity and its function in the venom is unknown. It may play a role as a housekeeping or regulatory protein. The chain is U7-hexatoxin-Hi1a from Hadronyche infensa (Fraser island funnel-web spider).